Reading from the N-terminus, the 243-residue chain is Small ribosomal subunit protein uS3 (243 aa).

Residues 39-107 (IRAYLIKELK…ETHLNIVEVR (69 aa)) enclose the KH type-2 domain. The disordered stretch occupies residues 214–243 (ASERRGLEGDAQGPASRERGDRPDRRRENA). Positions 229-243 (SRERGDRPDRRRENA) are enriched in basic and acidic residues.

The protein belongs to the universal ribosomal protein uS3 family. In terms of assembly, part of the 30S ribosomal subunit. Forms a tight complex with proteins S10 and S14.

Its function is as follows. Binds the lower part of the 30S subunit head. Binds mRNA in the 70S ribosome, positioning it for translation. In Agrobacterium fabrum (strain C58 / ATCC 33970) (Agrobacterium tumefaciens (strain C58)), this protein is Small ribosomal subunit protein uS3.